Here is a 205-residue protein sequence, read N- to C-terminus: Outer-membrane lipoprotein LolB (205 aa).

Positions 1-17 (MFLRHCITFTMIALLAG) are cleaved as a signal peptide. Residue C18 is the site of N-palmitoyl cysteine attachment. C18 is lipidated: S-diacylglycerol cysteine.

The protein belongs to the LolB family. In terms of assembly, monomer.

Its subcellular location is the cell outer membrane. Functionally, plays a critical role in the incorporation of lipoproteins in the outer membrane after they are released by the LolA protein. In Pseudomonas putida (strain ATCC 700007 / DSM 6899 / JCM 31910 / BCRC 17059 / LMG 24140 / F1), this protein is Outer-membrane lipoprotein LolB.